The primary structure comprises 385 residues: Alkanesulfonate monooxygenase 2 (385 aa).

This sequence belongs to the SsuD family.

The catalysed reaction is an alkanesulfonate + FMNH2 + O2 = an aldehyde + FMN + sulfite + H2O + 2 H(+). Its function is as follows. Catalyzes the desulfonation of aliphatic sulfonates. The chain is Alkanesulfonate monooxygenase 2 (ssuD2) from Mesorhizobium japonicum (strain LMG 29417 / CECT 9101 / MAFF 303099) (Mesorhizobium loti (strain MAFF 303099)).